The primary structure comprises 328 residues: D-cysteine desulfhydrase (328 aa).

N6-(pyridoxal phosphate)lysine is present on Lys-51.

It belongs to the ACC deaminase/D-cysteine desulfhydrase family. In terms of assembly, homodimer. It depends on pyridoxal 5'-phosphate as a cofactor.

The catalysed reaction is D-cysteine + H2O = hydrogen sulfide + pyruvate + NH4(+) + H(+). In terms of biological role, catalyzes the alpha,beta-elimination reaction of D-cysteine and of several D-cysteine derivatives. It could be a defense mechanism against D-cysteine. The sequence is that of D-cysteine desulfhydrase from Shigella boydii serotype 18 (strain CDC 3083-94 / BS512).